The sequence spans 63 residues: Metallothionein-2 (63 aa).

This sequence belongs to the metallothionein superfamily. Type 6 family.

This protein binds cations of several transition elements. The chain is Metallothionein-2 (mtl-2) from Caenorhabditis elegans.